The chain runs to 347 residues: GMP reductase (347 aa).

Residue 108-131 coordinates NADP(+); the sequence is ADFEKTVQILALNPALNFVCIDVA. Positions 181 and 183 each coordinate K(+). The active-site Thioimidate intermediate is the C186. Position 216 to 239 (216 to 239) interacts with NADP(+); sequence IVSDGGCTMPGDVAKAFGGGADFV.

Belongs to the IMPDH/GMPR family. GuaC type 1 subfamily. Homotetramer.

It catalyses the reaction IMP + NH4(+) + NADP(+) = GMP + NADPH + 2 H(+). Catalyzes the irreversible NADPH-dependent deamination of GMP to IMP. It functions in the conversion of nucleobase, nucleoside and nucleotide derivatives of G to A nucleotides, and in maintaining the intracellular balance of A and G nucleotides. The sequence is that of GMP reductase from Salmonella choleraesuis (strain SC-B67).